The chain runs to 282 residues: Trihydroxynaphthalene reductase (282 aa).

Positions 41, 114, and 147 each coordinate NADP(+). Residues serine 164 and tyrosine 178 each act as proton donor in the active site. Tyrosine 178, lysine 182, isoleucine 211, and threonine 213 together coordinate NADP(+). Lysine 182 (lowers pKa of active site Tyr) is an active-site residue.

It belongs to the short-chain dehydrogenases/reductases (SDR) family. Homotetramer.

The protein operates within pigment biosynthesis; melanin biosynthesis. Its function is as follows. Catalyzes the NADPH-dependent reduction of 1,3,8-trihydroxynaphthalene (T3HN) into (-)-vermelone. Essential for appressorial penetration of colletotrichum lagenarium. The polypeptide is Trihydroxynaphthalene reductase (THR1) (Colletotrichum orbiculare (strain 104-T / ATCC 96160 / CBS 514.97 / LARS 414 / MAFF 240422) (Cucumber anthracnose fungus)).